A 349-amino-acid polypeptide reads, in one-letter code: Phosphoribosylformylglycinamidine cyclo-ligase (349 aa).

It belongs to the AIR synthase family.

It localises to the cytoplasm. The catalysed reaction is 2-formamido-N(1)-(5-O-phospho-beta-D-ribosyl)acetamidine + ATP = 5-amino-1-(5-phospho-beta-D-ribosyl)imidazole + ADP + phosphate + H(+). It participates in purine metabolism; IMP biosynthesis via de novo pathway; 5-amino-1-(5-phospho-D-ribosyl)imidazole from N(2)-formyl-N(1)-(5-phospho-D-ribosyl)glycinamide: step 2/2. The polypeptide is Phosphoribosylformylglycinamidine cyclo-ligase (Bordetella petrii (strain ATCC BAA-461 / DSM 12804 / CCUG 43448)).